Here is a 327-residue protein sequence, read N- to C-terminus: Zinc finger protein 444 (327 aa).

Position 1 is an N-acetylmethionine (M1). Residue K8 forms a Glycyl lysine isopeptide (Lys-Gly) (interchain with G-Cter in SUMO2) linkage. Phosphoserine occurs at positions 18 and 104. The SCAN box domain maps to 20 to 104; it reads WHRFRRFHLG…LEELWGPAAS (85 aa). The tract at residues 101–171 is disordered; that stretch reads PAASPDGSSA…SPPLAPGLPA (71 aa). A compositionally biased stretch (polar residues) spans 106–118; that stretch reads DGSSATRVPQDVT. Positions 134 to 148 are enriched in low complexity; sequence PLAGTAPGAEGPAPG. 2 consecutive C2H2-type zinc fingers follow at residues 179–201 and 207–229; these read TSCPECGKTSLKPAHLLRHRQSH and HACPECGKAFRRKEHLRRHRDTH. A Glycyl lysine isopeptide (Lys-Gly) (interchain with G-Cter in SUMO2) cross-link involves residue K190. Positions 220 to 243 are disordered; the sequence is EHLRRHRDTHPGSPGSPGPALRPL. S235 bears the Phosphoserine mark. 2 consecutive C2H2-type zinc fingers follow at residues 250–272 and 278–300; these read HACCECGKTFYWREHLVRHRKTH and FACWECGKGFGRREHVLRHQRIH. A compositionally biased stretch (low complexity) spans 305–314; it reads ASAQGAVAPG. The segment at 305-327 is disordered; that stretch reads ASAQGAVAPGPDGGGPFPPWPLG.

Belongs to the krueppel C2H2-type zinc-finger protein family.

The protein resides in the nucleus. In terms of biological role, transcriptional regulator. Binds to the 5'-flanking critical region of the SCARF1 promoter. The protein is Zinc finger protein 444 (ZNF444) of Homo sapiens (Human).